The chain runs to 458 residues: Protochlorophyllide reductase, chloroplastic (458 aa).

Belongs to the short-chain dehydrogenases/reductases (SDR) family. POR subfamily.

Its subcellular location is the plastid. The protein resides in the chloroplast. It catalyses the reaction chlorophyllide a + NADP(+) = protochlorophyllide a + NADPH + H(+). It functions in the pathway porphyrin-containing compound metabolism; chlorophyll biosynthesis. Functionally, phototransformation of protochlorophyllide (Pchlide) to chlorophyllide (Chlide). The sequence is that of Protochlorophyllide reductase, chloroplastic (PORA) from Marchantia paleacea (Liverwort).